Reading from the N-terminus, the 398-residue chain is Acetate kinase (398 aa).

N9 contacts Mg(2+). K16 lines the ATP pocket. R90 lines the substrate pocket. The active-site Proton donor/acceptor is D147. ATP is bound by residues 207-211 (HIGNG), 282-284 (DLR), and 330-334 (GVGEN). E384 contributes to the Mg(2+) binding site.

The protein belongs to the acetokinase family. In terms of assembly, homodimer. Requires Mg(2+) as cofactor. It depends on Mn(2+) as a cofactor.

Its subcellular location is the cytoplasm. The catalysed reaction is acetate + ATP = acetyl phosphate + ADP. The protein operates within metabolic intermediate biosynthesis; acetyl-CoA biosynthesis; acetyl-CoA from acetate: step 1/2. Functionally, catalyzes the formation of acetyl phosphate from acetate and ATP. Can also catalyze the reverse reaction. This Staphylococcus haemolyticus (strain JCSC1435) protein is Acetate kinase.